The following is a 218-amino-acid chain: Large ribosomal subunit protein uL3 (218 aa).

The disordered stretch occupies residues 126-170 (HGFSRGPMSHGSKNHREPGSTGAGTTPGRIYPGKRMAGRYGGKKR).

This sequence belongs to the universal ribosomal protein uL3 family. Part of the 50S ribosomal subunit. Forms a cluster with proteins L14 and L19.

Functionally, one of the primary rRNA binding proteins, it binds directly near the 3'-end of the 23S rRNA, where it nucleates assembly of the 50S subunit. The polypeptide is Large ribosomal subunit protein uL3 (Prochlorococcus marinus (strain MIT 9313)).